We begin with the raw amino-acid sequence, 267 residues long: 4-hydroxy-tetrahydrodipicolinate reductase (267 aa).

Residues Gly8–Met13 and Glu34 contribute to the NAD(+) site. An NADP(+)-binding site is contributed by Arg35. NAD(+) contacts are provided by residues Gly98–Thr100 and Ala122–Met125. His155 (proton donor/acceptor) is an active-site residue. His156 contributes to the (S)-2,3,4,5-tetrahydrodipicolinate binding site. Lys159 functions as the Proton donor in the catalytic mechanism. Residue Gly165 to Thr166 coordinates (S)-2,3,4,5-tetrahydrodipicolinate.

The protein belongs to the DapB family.

The protein resides in the cytoplasm. It catalyses the reaction (S)-2,3,4,5-tetrahydrodipicolinate + NAD(+) + H2O = (2S,4S)-4-hydroxy-2,3,4,5-tetrahydrodipicolinate + NADH + H(+). It carries out the reaction (S)-2,3,4,5-tetrahydrodipicolinate + NADP(+) + H2O = (2S,4S)-4-hydroxy-2,3,4,5-tetrahydrodipicolinate + NADPH + H(+). It participates in amino-acid biosynthesis; L-lysine biosynthesis via DAP pathway; (S)-tetrahydrodipicolinate from L-aspartate: step 4/4. Its function is as follows. Catalyzes the conversion of 4-hydroxy-tetrahydrodipicolinate (HTPA) to tetrahydrodipicolinate. The chain is 4-hydroxy-tetrahydrodipicolinate reductase from Geobacter sp. (strain M21).